The chain runs to 44 residues: DNA-directed RNA polymerase subunit Rpo12 (44 aa).

The Zn(2+) site is built by Cys-8, Cys-22, and Cys-25.

This sequence belongs to the archaeal Rpo12/eukaryotic RPC10 RNA polymerase subunit family. In terms of assembly, part of the RNA polymerase complex. The cofactor is Zn(2+).

It localises to the cytoplasm. The catalysed reaction is RNA(n) + a ribonucleoside 5'-triphosphate = RNA(n+1) + diphosphate. In terms of biological role, DNA-dependent RNA polymerase (RNAP) catalyzes the transcription of DNA into RNA using the four ribonucleoside triphosphates as substrates. The sequence is that of DNA-directed RNA polymerase subunit Rpo12 from Halobacterium salinarum (strain ATCC 29341 / DSM 671 / R1).